The primary structure comprises 577 residues: DEAD-box ATP-dependent RNA helicase 22 (577 aa).

The Q motif signature appears at 82–110; the sequence is TSWESLGVSDRLASALHGAGLARPSLVQA. Positions 113–375 constitute a Helicase ATP-binding domain; that stretch reads IPHVLTTNDV…GGVLKRMFPN (263 aa). 126–133 is a binding site for ATP; it reads AETGSGKT. Residues 249–252 carry the DEAD box motif; the sequence is DEAD. A disordered region spans residues 288–317; sequence SLGDTNEYREDSDSQSAELSADDEENEDGL. The 162-residue stretch at 407-568 folds into the Helicase C-terminal domain; the sequence is LLDAVKYGLK…SFRNKLKKQA (162 aa).

The protein belongs to the DEAD box helicase family.

It carries out the reaction ATP + H2O = ADP + phosphate + H(+). The chain is DEAD-box ATP-dependent RNA helicase 22 from Oryza sativa subsp. japonica (Rice).